We begin with the raw amino-acid sequence, 795 residues long: MKFSELWLREWVNPAIDSDTLANQITMAGLEVDGVEPVAGSFHGVVVGEVVECAQHPNADKLRVTKVNVGGDRLLDIVCGAPNCRQGLRVAVATIGAVLPGDFKIKAAKLRGEPSEGMLCSFSELGISDDHSGIIELPADAPIGTDIREYLKLDDNTIEISVTPNRADCLGIIGVARDVAVLNQLPLVEPEIVPVGATIDDTLPITVEAPEACPRYLGRVVKGINVKAPTPLWMKEKLRRCGIRSIDAVVDVTNYVLLELGQPMHAFDKDRIEGGIVVRMAKEGETLVLLDGTEAKLNADTLVIADHNKALAMGGIFGGEHSGVNDETQNVLLECAFFSPLSITGRARRHGLHTDASHRYERGVDPVLQHKAMERATRLLIDICGGEAGPVIDITNEATLPKRATITLRRSKLDRLIGHHIADEQVTDILRRLGCEVTEGKDEWQAVAPSWRFDMEIEEDLVEEVARVYGYNNIPDEPVQASLIMGTHREADLSLKRVKTLLNDKGYQEVITYSFVDPKVQQMIHPGVEALLLASPISVEMSAMRLSLWTGLLATVVYNQNRQQNRVRIFESGLRFVPDTQAPLGIRQDLMLAGVICGNRYEEHWNLAKETVDFYDLKGDLESVLDLTGKLNEVEFRAEANPALHPGQSAAIYLKGERIGFVGVVHPELERKLDLNGRTLVFELEWNKLADRVVPQAREISRFPANRRDIAVVVAENVPAADILSECKKVGVNQVVGVNLFDVYRGKGVAEGYKSLAISLILQDTSRTLEEEEIAATVAKCVEALKERFQASLRD.

In terms of domain architecture, tRNA-binding spans 39–148 (AGSFHGVVVG…ADAPIGTDIR (110 aa)). The B5 domain maps to 401 to 476 (PKRATITLRR…RVYGYNNIPD (76 aa)). Residues D454, D460, E463, and E464 each coordinate Mg(2+). One can recognise an FDX-ACB domain in the interval 701 to 794 (SRFPANRRDI…LKERFQASLR (94 aa)).

It belongs to the phenylalanyl-tRNA synthetase beta subunit family. Type 1 subfamily. Tetramer of two alpha and two beta subunits. Mg(2+) serves as cofactor.

It is found in the cytoplasm. It catalyses the reaction tRNA(Phe) + L-phenylalanine + ATP = L-phenylalanyl-tRNA(Phe) + AMP + diphosphate + H(+). The polypeptide is Phenylalanine--tRNA ligase beta subunit (Shigella flexneri).